Consider the following 193-residue polypeptide: DNA damage-inducible transcript 4-like protein (193 aa).

It belongs to the DDIT4 family.

It is found in the cytoplasm. Inhibits cell growth by regulating the TOR signaling pathway upstream of the TSC1-TSC2 complex and downstream of AKT1. This is DNA damage-inducible transcript 4-like protein (DDIT4L) from Pongo abelii (Sumatran orangutan).